The sequence spans 218 residues: Large ribosomal subunit protein uL3 (218 aa).

The protein belongs to the universal ribosomal protein uL3 family. As to quaternary structure, part of the 50S ribosomal subunit. Forms a cluster with proteins L14 and L19.

Its function is as follows. One of the primary rRNA binding proteins, it binds directly near the 3'-end of the 23S rRNA, where it nucleates assembly of the 50S subunit. This chain is Large ribosomal subunit protein uL3, found in Corynebacterium diphtheriae (strain ATCC 700971 / NCTC 13129 / Biotype gravis).